The primary structure comprises 326 residues: Methionyl-tRNA formyltransferase (326 aa).

Residue 110 to 113 (SLLP) coordinates (6S)-5,6,7,8-tetrahydrofolate. Residues 307–326 (VGTRFSPPEAPQREPAPGEA) form a disordered region.

It belongs to the Fmt family.

It carries out the reaction L-methionyl-tRNA(fMet) + (6R)-10-formyltetrahydrofolate = N-formyl-L-methionyl-tRNA(fMet) + (6S)-5,6,7,8-tetrahydrofolate + H(+). Functionally, attaches a formyl group to the free amino group of methionyl-tRNA(fMet). The formyl group appears to play a dual role in the initiator identity of N-formylmethionyl-tRNA by promoting its recognition by IF2 and preventing the misappropriation of this tRNA by the elongation apparatus. This chain is Methionyl-tRNA formyltransferase, found in Symbiobacterium thermophilum (strain DSM 24528 / JCM 14929 / IAM 14863 / T).